Here is a 279-residue protein sequence, read N- to C-terminus: NADPH-dependent 7-cyano-7-deazaguanine reductase (279 aa).

Substrate is bound at residue V86–S88. S88–K89 contributes to the NADPH binding site. C187 functions as the Thioimide intermediate in the catalytic mechanism. Catalysis depends on D194, which acts as the Proton donor. A substrate-binding site is contributed by H226 to E227. NADPH is bound at residue R255–G256.

It belongs to the GTP cyclohydrolase I family. QueF type 2 subfamily. As to quaternary structure, homodimer.

Its subcellular location is the cytoplasm. It catalyses the reaction 7-aminomethyl-7-carbaguanine + 2 NADP(+) = 7-cyano-7-deazaguanine + 2 NADPH + 3 H(+). It participates in tRNA modification; tRNA-queuosine biosynthesis. Its function is as follows. Catalyzes the NADPH-dependent reduction of 7-cyano-7-deazaguanine (preQ0) to 7-aminomethyl-7-deazaguanine (preQ1). The protein is NADPH-dependent 7-cyano-7-deazaguanine reductase of Actinobacillus succinogenes (strain ATCC 55618 / DSM 22257 / CCUG 43843 / 130Z).